The following is a 341-amino-acid chain: RNA 3'-terminal phosphate cyclase (341 aa).

ATP is bound by residues Gln-102 and 283–287 (HLADQ). His-308 functions as the Tele-AMP-histidine intermediate in the catalytic mechanism.

This sequence belongs to the RNA 3'-terminal cyclase family. Type 1 subfamily.

It localises to the cytoplasm. The enzyme catalyses a 3'-end 3'-phospho-ribonucleotide-RNA + ATP = a 3'-end 2',3'-cyclophospho-ribonucleotide-RNA + AMP + diphosphate. In terms of biological role, catalyzes the conversion of 3'-phosphate to a 2',3'-cyclic phosphodiester at the end of RNA. The mechanism of action of the enzyme occurs in 3 steps: (A) adenylation of the enzyme by ATP; (B) transfer of adenylate to an RNA-N3'P to produce RNA-N3'PP5'A; (C) and attack of the adjacent 2'-hydroxyl on the 3'-phosphorus in the diester linkage to produce the cyclic end product. The biological role of this enzyme is unknown but it is likely to function in some aspects of cellular RNA processing. This chain is RNA 3'-terminal phosphate cyclase, found in Pseudomonas aeruginosa (strain LESB58).